The primary structure comprises 225 residues: Fibronectin type III domain-containing protein 10 (225 aa).

The first 19 residues, 1 to 19 (MRAPPLLLLLAACAPPSGA), serve as a signal peptide directing secretion. Residues 20-181 (AVDPTPPGWE…FTAEPAAMQE (162 aa)) are Extracellular-facing. Positions 72–167 (LASAGGSLRA…ELAAAPPELA (96 aa)) constitute a Fibronectin type-III domain. Residues N86 and N109 are each glycosylated (N-linked (GlcNAc...) asparagine). A helical membrane pass occupies residues 182–202 (IVVAMTAVGGSICVMLVVICL). At 203 to 225 (LVAYITENLMHPTFRRPSLRRQP) the chain is on the cytoplasmic side.

The protein localises to the membrane. The sequence is that of Fibronectin type III domain-containing protein 10 (Fndc10) from Rattus norvegicus (Rat).